The following is a 390-amino-acid chain: Putative nickel insertion protein (390 aa).

It belongs to the LarC family.

The polypeptide is Putative nickel insertion protein (Geobacter metallireducens (strain ATCC 53774 / DSM 7210 / GS-15)).